The primary structure comprises 356 residues: Ribosomal RNA large subunit methyltransferase M (356 aa).

S-adenosyl-L-methionine-binding positions include Ser187, 220-223, Asp239, Asp259, and Asp276; that span reads CPGG. The active-site Proton acceptor is the Lys305.

Belongs to the class I-like SAM-binding methyltransferase superfamily. RNA methyltransferase RlmE family. RlmM subfamily. In terms of assembly, monomer.

Its subcellular location is the cytoplasm. It carries out the reaction cytidine(2498) in 23S rRNA + S-adenosyl-L-methionine = 2'-O-methylcytidine(2498) in 23S rRNA + S-adenosyl-L-homocysteine + H(+). Its function is as follows. Catalyzes the 2'-O-methylation at nucleotide C2498 in 23S rRNA. This is Ribosomal RNA large subunit methyltransferase M from Pseudoalteromonas atlantica (strain T6c / ATCC BAA-1087).